A 338-amino-acid polypeptide reads, in one-letter code: UDP-glucose 4-epimerase (338 aa).

Residues 11–12, 31–36, 58–59, 80–84, Asn99, Ser124, Tyr149, Lys153, and Phe178 contribute to the NAD(+) site; these read YI, DNLCNS, DI, and FAGLK. Substrate contacts are provided by Ser124 and Tyr149. Catalysis depends on Tyr149, which acts as the Proton acceptor. Substrate is bound by residues Asn179, 199-200, 216-218, Arg231, 292-295, and Tyr299; these read NL, AVF, and RDGD.

This sequence belongs to the NAD(P)-dependent epimerase/dehydratase family. Homodimer. Requires NAD(+) as cofactor.

The catalysed reaction is UDP-alpha-D-glucose = UDP-alpha-D-galactose. It functions in the pathway carbohydrate metabolism; galactose metabolism. Involved in the metabolism of galactose. Catalyzes the conversion of UDP-galactose (UDP-Gal) to UDP-glucose (UDP-Glc) through a mechanism involving the transient reduction of NAD. This chain is UDP-glucose 4-epimerase (galE), found in Salmonella typhimurium (strain LT2 / SGSC1412 / ATCC 700720).